A 583-amino-acid chain; its full sequence is 2-succinyl-5-enolpyruvyl-6-hydroxy-3-cyclohexene-1-carboxylate synthase (583 aa).

It belongs to the TPP enzyme family. MenD subfamily. As to quaternary structure, homodimer. Mg(2+) serves as cofactor. The cofactor is Mn(2+). It depends on thiamine diphosphate as a cofactor.

The enzyme catalyses isochorismate + 2-oxoglutarate + H(+) = 5-enolpyruvoyl-6-hydroxy-2-succinyl-cyclohex-3-ene-1-carboxylate + CO2. It functions in the pathway quinol/quinone metabolism; 1,4-dihydroxy-2-naphthoate biosynthesis; 1,4-dihydroxy-2-naphthoate from chorismate: step 2/7. It participates in cofactor biosynthesis; phylloquinone biosynthesis. Functionally, catalyzes the thiamine diphosphate-dependent decarboxylation of 2-oxoglutarate and the subsequent addition of the resulting succinic semialdehyde-thiamine pyrophosphate anion to isochorismate to yield 2-succinyl-5-enolpyruvyl-6-hydroxy-3-cyclohexene-1-carboxylate (SEPHCHC). The protein is 2-succinyl-5-enolpyruvyl-6-hydroxy-3-cyclohexene-1-carboxylate synthase of Nostoc sp. (strain PCC 7120 / SAG 25.82 / UTEX 2576).